We begin with the raw amino-acid sequence, 202 residues long: NAD(P)H dehydrogenase (quinone) (202 aa).

Positions 7–193 (VLVLYYSMYG…TIARFQGRHF (187 aa)) constitute a Flavodoxin-like domain. Residues 13–18 (SMYGHI) and 82–84 (TRF) each bind FMN. Residue Tyr15 coordinates NAD(+). Trp102 is a binding site for substrate. FMN-binding positions include 117–122 (STATGG) and His137.

It belongs to the WrbA family. The cofactor is FMN.

The enzyme catalyses a quinone + NADH + H(+) = a quinol + NAD(+). It catalyses the reaction a quinone + NADPH + H(+) = a quinol + NADP(+). The polypeptide is NAD(P)H dehydrogenase (quinone) (Rhodospirillum rubrum (strain ATCC 11170 / ATH 1.1.1 / DSM 467 / LMG 4362 / NCIMB 8255 / S1)).